The chain runs to 268 residues: Holocytochrome c-type synthase (268 aa).

Positions 1–22 (MGLSPSAPAVAVQASNASASPP) are enriched in low complexity. The tract at residues 1 to 25 (MGLSPSAPAVAVQASNASASPPSGC) is disordered. G2 is lipidated: N-myristoyl glycine. 2 HRM repeats span residues 24–29 (GCPMHE) and 34–39 (GCPVNT).

This sequence belongs to the cytochrome c-type heme lyase family.

Its subcellular location is the mitochondrion inner membrane. The protein resides in the membrane. It carries out the reaction holo-[cytochrome c] = apo-[cytochrome c] + heme b. Lyase that catalyzes the covalent linking of the heme group to the cytochrome C apoprotein to produce the mature functional cytochrome. The polypeptide is Holocytochrome c-type synthase (Homo sapiens (Human)).